The following is a 197-amino-acid chain: Imidazoleglycerol-phosphate dehydratase (197 aa).

Belongs to the imidazoleglycerol-phosphate dehydratase family.

It is found in the cytoplasm. The enzyme catalyses D-erythro-1-(imidazol-4-yl)glycerol 3-phosphate = 3-(imidazol-4-yl)-2-oxopropyl phosphate + H2O. It functions in the pathway amino-acid biosynthesis; L-histidine biosynthesis; L-histidine from 5-phospho-alpha-D-ribose 1-diphosphate: step 6/9. This Nitrosomonas europaea (strain ATCC 19718 / CIP 103999 / KCTC 2705 / NBRC 14298) protein is Imidazoleglycerol-phosphate dehydratase.